We begin with the raw amino-acid sequence, 317 residues long: COP9 signalosome complex subunit 6b (317 aa).

The region spanning 11–164 is the MPN domain; it reads FKLHPLVMLN…VTIYESEFHV (154 aa).

The protein belongs to the peptidase M67A family. CSN6 subfamily. As to quaternary structure, component of the CSN complex, probably composed of CSN1, CSN2, CSN3, CSN4, CSN5 (CSN5A or CSN5B), CSN6 (CSN6A or CSN6B), CSN7 and CSN8. Interacts with itself. In the complex, it probably interacts directly with CSN4, CSN5A or CSN5B, and CSN7. Binds to the translation initiation factors TIF3E1.

Its subcellular location is the cytoplasm. It localises to the nucleus. Its function is as follows. Component of the COP9 signalosome complex (CSN), a complex involved in various cellular and developmental processes such as photomorphogenesis and auxin and jasmonate responses. The CSN complex is an essential regulator of the ubiquitin (Ubl) conjugation pathway by mediating the deneddylation of the cullin subunits of SCF-type E3 ligase complexes, leading to decrease the Ubl ligase activity of SCF. It is involved in repression of photomorphogenesis in darkness by regulating the activity of COP1-containing Ubl ligase complexes. The complex is also required for degradation of PSIAA6 by regulating the activity of the Ubl ligase SCF-TIR complex. Essential for the structural integrity of the CSN holocomplex. The chain is COP9 signalosome complex subunit 6b from Arabidopsis thaliana (Mouse-ear cress).